The sequence spans 71 residues: MGSFSIWHWLIVLVVVLLLFGRGKIPELMGDMAKGIKNFRKGMTDEAEEAKTVEHRTDEPVGEVKQKASKS.

A helical transmembrane segment spans residues 1–21; the sequence is MGSFSIWHWLIVLVVVLLLFG. Positions 47-71 are disordered; that stretch reads AEEAKTVEHRTDEPVGEVKQKASKS. A compositionally biased stretch (basic and acidic residues) spans 49-71; the sequence is EAKTVEHRTDEPVGEVKQKASKS.

Belongs to the TatA/E family. The Tat system comprises two distinct complexes: a TatABC complex, containing multiple copies of TatA, TatB and TatC subunits, and a separate TatA complex, containing only TatA subunits. Substrates initially bind to the TatABC complex, which probably triggers association of the separate TatA complex to form the active translocon.

It localises to the cell inner membrane. In terms of biological role, part of the twin-arginine translocation (Tat) system that transports large folded proteins containing a characteristic twin-arginine motif in their signal peptide across membranes. TatA could form the protein-conducting channel of the Tat system. This chain is Sec-independent protein translocase protein TatA, found in Chelativorans sp. (strain BNC1).